The following is a 234-amino-acid chain: MVRAFAYEEIGETSTEAHASVEDNKRDRTRRVINYNLRSTTMISSLSKRLKIDECKNQDPEQNPNRVASSPSLCHVKSKRPQKGVSNKPILDMDFLNEEELEKIDRHYKKISDSDKGADVILVNSEGLQRKLKLKRWDMTSTSNYVLGSGWNKVVTENILETGTRLRLWSFHSPDMLFFALVLSDPDLAPTKDWECLNLLAKLTVETACLEASQDADTMSSLVSDTELDLELRL.

Residues 55–88 (CKNQDPEQNPNRVASSPSLCHVKSKRPQKGVSNK) are disordered. The segment covering 60 to 72 (PEQNPNRVASSPS) has biased composition (polar residues). The TF-B3 DNA-binding region spans 87–185 (NKPILDMDFL…MLFFALVLSD (99 aa)).

The protein resides in the nucleus. The chain is Putative B3 domain-containing protein At2g18810 from Arabidopsis thaliana (Mouse-ear cress).